Here is a 79-residue protein sequence, read N- to C-terminus: Moronecidin (79 aa).

The first 22 residues, 1–22 (MKCATLFLVLSMVVLMAEPGDA), serve as a signal peptide directing secretion. A Glycine amide modification is found at G44. A disordered region spans residues 45-79 (GKAEQDQQDQQYQQEQQEQQAQQYQRFNRERAAFD). Residues 47 to 79 (AEQDQQDQQYQQEQQEQQAQQYQRFNRERAAFD) constitute a propeptide that is removed on maturation. A compositionally biased stretch (low complexity) spans 52–69 (QDQQYQQEQQEQQAQQYQ).

Expressed in mast cells in gill, skin and gut, and in lining blood vessels in the viscera. Also in intestine, spleen, anterior kidney, and blood cells.

The protein resides in the secreted. Antimicrobial peptide with broad-spectrum activity against Gram-positive and Gram-negative bacteria as well as against a variety of fungi. Rapidly inactivates channel catfish herpesvirus (ED(50)=4 uM) and frog virus 3 (ED(50)=13 uM) over a wide temperature range. Seems to disrupt the membranes by adopting an alpha helical conformation and forming toroidal pores. Has hemolytic activity. This Morone saxatilis (Striped bass) protein is Moronecidin.